The sequence spans 302 residues: Lipoyl synthase (302 aa).

[4Fe-4S] cluster-binding residues include Cys44, Cys49, Cys55, Cys70, Cys74, Cys77, and Ser283. Residues 56–272 (WSKKHATVMI…ARVAKSKGFL (217 aa)) form the Radical SAM core domain.

The protein belongs to the radical SAM superfamily. Lipoyl synthase family. It depends on [4Fe-4S] cluster as a cofactor.

The protein resides in the cytoplasm. The enzyme catalyses [[Fe-S] cluster scaffold protein carrying a second [4Fe-4S](2+) cluster] + N(6)-octanoyl-L-lysyl-[protein] + 2 oxidized [2Fe-2S]-[ferredoxin] + 2 S-adenosyl-L-methionine + 4 H(+) = [[Fe-S] cluster scaffold protein] + N(6)-[(R)-dihydrolipoyl]-L-lysyl-[protein] + 4 Fe(3+) + 2 hydrogen sulfide + 2 5'-deoxyadenosine + 2 L-methionine + 2 reduced [2Fe-2S]-[ferredoxin]. Its pathway is protein modification; protein lipoylation via endogenous pathway; protein N(6)-(lipoyl)lysine from octanoyl-[acyl-carrier-protein]: step 2/2. Catalyzes the radical-mediated insertion of two sulfur atoms into the C-6 and C-8 positions of the octanoyl moiety bound to the lipoyl domains of lipoate-dependent enzymes, thereby converting the octanoylated domains into lipoylated derivatives. The protein is Lipoyl synthase of Orientia tsutsugamushi (strain Ikeda) (Rickettsia tsutsugamushi).